The following is a 328-amino-acid chain: Phosphate acyltransferase (328 aa).

The protein belongs to the PlsX family. Homodimer. Probably interacts with PlsY.

Its subcellular location is the cytoplasm. The enzyme catalyses a fatty acyl-[ACP] + phosphate = an acyl phosphate + holo-[ACP]. The protein operates within lipid metabolism; phospholipid metabolism. In terms of biological role, catalyzes the reversible formation of acyl-phosphate (acyl-PO(4)) from acyl-[acyl-carrier-protein] (acyl-ACP). This enzyme utilizes acyl-ACP as fatty acyl donor, but not acyl-CoA. The protein is Phosphate acyltransferase of Campylobacter jejuni (strain RM1221).